Reading from the N-terminus, the 154-residue chain is SsrA-binding protein (154 aa).

Basic and acidic residues predominate over residues 123–142 (AEHDKRHTIKDRDWQREQGR). Positions 123–154 (AEHDKRHTIKDRDWQREQGRLMRHKVSAPHKD) are disordered. Over residues 143–154 (LMRHKVSAPHKD) the composition is skewed to basic residues.

It belongs to the SmpB family.

Its subcellular location is the cytoplasm. Functionally, required for rescue of stalled ribosomes mediated by trans-translation. Binds to transfer-messenger RNA (tmRNA), required for stable association of tmRNA with ribosomes. tmRNA and SmpB together mimic tRNA shape, replacing the anticodon stem-loop with SmpB. tmRNA is encoded by the ssrA gene; the 2 termini fold to resemble tRNA(Ala) and it encodes a 'tag peptide', a short internal open reading frame. During trans-translation Ala-aminoacylated tmRNA acts like a tRNA, entering the A-site of stalled ribosomes, displacing the stalled mRNA. The ribosome then switches to translate the ORF on the tmRNA; the nascent peptide is terminated with the 'tag peptide' encoded by the tmRNA and targeted for degradation. The ribosome is freed to recommence translation, which seems to be the essential function of trans-translation. This is SsrA-binding protein from Leptothrix cholodnii (strain ATCC 51168 / LMG 8142 / SP-6) (Leptothrix discophora (strain SP-6)).